The primary structure comprises 63 residues: Large ribosomal subunit protein uL29 (63 aa).

This sequence belongs to the universal ribosomal protein uL29 family.

The protein is Large ribosomal subunit protein uL29 of Neisseria meningitidis serogroup C (strain 053442).